A 288-amino-acid polypeptide reads, in one-letter code: SUR7 family protein pun1 (288 aa).

Topologically, residues 1–11 (MGMGFNPIKAL) are cytoplasmic. Residues 12-32 (FTGIGTVCVGVGALLSILCII) form a helical membrane-spanning segment. N-linked (GlcNAc...) asparagine glycosylation is found at Asn33, Asn50, Asn59, Asn66, Asn122, Asn153, and Asn160. Over 33–185 (NQTQHNIAFQ…GACYAMRAMY (153 aa)) the chain is Extracellular. The helical transmembrane segment at 186–206 (ILGFIFFALTIVSIVISCLPF) threads the bilayer. The Cytoplasmic portion of the chain corresponds to 207–210 (FGPL). Residues 211–231 (FLNVFSFFATIFTFIAAVIAV) form a helical membrane-spanning segment. The Extracellular portion of the chain corresponds to 232 to 257 (ATYRIAISELEKNIEILNIPIVLGKK). A helical transmembrane segment spans residues 258–278 (IYAYSFLSAAAGLAACILYFI). Topologically, residues 279 to 288 (GNLTSGYSPL) are cytoplasmic.

It belongs to the SUR7 family.

It localises to the golgi apparatus membrane. It is found in the cell membrane. The protein localises to the cell tip. Its function is as follows. Contributes to the wild-type cellular response to nitrogen stress through signaling pathways that regulate the expression of genes involved in amino acid biosynthesis. Required for wild-type filamentous growth, cell growth, and cell-cell adhesion. The sequence is that of SUR7 family protein pun1 (pun1) from Schizosaccharomyces pombe (strain 972 / ATCC 24843) (Fission yeast).